Here is a 335-residue protein sequence, read N- to C-terminus: Fructose-1,6-bisphosphatase class 1 (335 aa).

Mg(2+) is bound by residues E90, D112, L114, and D115. Substrate contacts are provided by residues 115-118 (DGSS), N210, and K276. E282 is a Mg(2+) binding site.

Belongs to the FBPase class 1 family. Homotetramer. It depends on Mg(2+) as a cofactor.

The protein localises to the cytoplasm. It catalyses the reaction beta-D-fructose 1,6-bisphosphate + H2O = beta-D-fructose 6-phosphate + phosphate. It participates in carbohydrate biosynthesis; gluconeogenesis. The sequence is that of Fructose-1,6-bisphosphatase class 1 from Ectopseudomonas mendocina (strain ymp) (Pseudomonas mendocina).